A 483-amino-acid polypeptide reads, in one-letter code: UDP-N-acetylmuramyl-tripeptide synthetase (483 aa).

Serine 43 contacts UDP-N-acetyl-alpha-D-muramoyl-L-alanyl-D-glutamate. 116–122 (GTKGKTT) contacts ATP. UDP-N-acetyl-alpha-D-muramoyl-L-alanyl-D-glutamate is bound by residues 160–161 (TT), serine 187, and arginine 195. Lysine 229 is modified (N6-carboxylysine).

This sequence belongs to the MurCDEF family. MurE subfamily. In terms of processing, carboxylation is probably crucial for Mg(2+) binding and, consequently, for the gamma-phosphate positioning of ATP.

It localises to the cytoplasm. The protein operates within cell wall biogenesis; peptidoglycan biosynthesis. In terms of biological role, catalyzes the addition of an amino acid to the nucleotide precursor UDP-N-acetylmuramoyl-L-alanyl-D-glutamate (UMAG) in the biosynthesis of bacterial cell-wall peptidoglycan. This is UDP-N-acetylmuramyl-tripeptide synthetase from Lactococcus lactis subsp. cremoris (strain SK11).